We begin with the raw amino-acid sequence, 517 residues long: Cytochrome b mRNA maturase bI3 (517 aa).

Over M1 to N31 the chain is Mitochondrial matrix. A cytochrome b region spans residues M1–F169. The helical transmembrane segment at M32–M52 threads the bilayer. Topologically, residues H53–N84 are mitochondrial intermembrane. The helical transmembrane segment at G85–S105 threads the bilayer. Residues Y106 to N115 are Mitochondrial matrix-facing. The chain crosses the membrane as a helical span at residues V116–Y136. Residues G137–T145 lie on the Mitochondrial intermembrane side of the membrane. A helical membrane pass occupies residues V146–W166. The Mitochondrial matrix segment spans residues G167–S184. The interval N170–Y517 is maturase. Residues V185–Y205 form a helical membrane-spanning segment. Over N206–K224 the chain is Mitochondrial intermembrane. The chain crosses the membrane as a helical span at residues L225–Y242. Residues S243 to Y517 lie on the Mitochondrial matrix side of the membrane.

It in the N-terminal section; belongs to the cytochrome b family. The protein in the C-terminal section; belongs to the LAGLIDADG endonuclease family. Forms a ribonucleoprotein complex composed of maturase bI3 and 2 dimers of MRS1 that assemble around the bI3 RNA.

The protein resides in the mitochondrion inner membrane. Mitochondrial mRNA maturase required for splicing of intron 3 of the cytochrome b (COB) gene, containing its own coding sequence. In vivo splicing requires the formation of a ribonucleoprotein complex together with the imported mitochondrial RNA-splicing protein MRS1. The complex seems to stimulate the intrinsic ribozyme activity of intron bI3 through binding to and stabilizing specific secondary and tertiary structure elements in the RNA. This Saccharomyces cerevisiae (strain ATCC 204508 / S288c) (Baker's yeast) protein is Cytochrome b mRNA maturase bI3 (BI3).